The sequence spans 800 residues: Ent-copalyl diphosphate synthase 2 (800 aa).

Residues 52 to 80 (QGQETRERRQLDDDEHARPPQGGDDDVAA) are disordered. The span at 55-69 (ETRERRQLDDDEHAR) shows a compositional bias: basic and acidic residues. K242 is a substrate binding site. The Mg(2+) site is built by D374 and D376. The short motif at 374–377 (DIDD) is the DXDD motif element. K461 serves as a coordination point for substrate.

It belongs to the terpene synthase family. Mg(2+) serves as cofactor.

It catalyses the reaction (2E,6E,10E)-geranylgeranyl diphosphate = ent-copalyl diphosphate. Functionally, catalyzes the conversion of geranylgeranyl diphosphate to the phytoalexin precursor ent-copalyl diphosphate. The sequence is that of Ent-copalyl diphosphate synthase 2 (CPS2) from Oryza sativa subsp. indica (Rice).